The following is a 152-amino-acid chain: Syntaxin-8A (152 aa).

Residues 1–14 (MNNNNNFNSNFNSN) show a composition bias toward low complexity. Residues 1–22 (MNNNNNFNSNFNSNRISSTQPY) are disordered. At 1-131 (MNNNNNFNSN…LTQQSKTTGY (131 aa)) the chain is on the cytoplasmic side. The 63-residue stretch at 60–122 (KRDMEEQDKM…RNTTKNLITL (63 aa)) folds into the t-SNARE coiled-coil homology domain. A helical; Anchor for type IV membrane protein transmembrane segment spans residues 132 to 152 (CSAICFLLLVLLVIIILASVL).

This sequence belongs to the syntaxin family. As to quaternary structure, component of the SNARE complex composed of syn7A, syn8A, vamp7A and vti1A.

It localises to the endosome membrane. In terms of biological role, involved in the targeting and/or fusion of transport vesicles to their target membrane during transport of proteins from the early endosome to the lysosome. Required for fusion of late endosomes with lysosomes and homotypic lysosomal fusion. This is Syntaxin-8A from Dictyostelium discoideum (Social amoeba).